The primary structure comprises 328 residues: Malate dehydrogenase (328 aa).

NAD(+) is bound at residue 12–18; the sequence is GAAGQIG. 2 residues coordinate substrate: Arg-93 and Arg-99. NAD(+) contacts are provided by residues Asn-106, Gln-113, and 130–132; that span reads VGN. 2 residues coordinate substrate: Asn-132 and Arg-166. Residue His-191 is the Proton acceptor of the active site.

Belongs to the LDH/MDH superfamily. MDH type 2 family.

It carries out the reaction (S)-malate + NAD(+) = oxaloacetate + NADH + H(+). Catalyzes the reversible oxidation of malate to oxaloacetate. This chain is Malate dehydrogenase, found in Dechloromonas aromatica (strain RCB).